The following is a 33-amino-acid chain: Brevinin-2E (33 aa).

Cysteines 27 and 33 form a disulfide.

This sequence belongs to the frog skin active peptide (FSAP) family. Brevinin subfamily. Expressed by the skin glands.

Its subcellular location is the secreted. Its function is as follows. Shows antibacterial activity against representative Gram-negative and Gram-positive bacterial species, and hemolytic activity. This is Brevinin-2E from Pelophylax lessonae (Pool frog).